A 575-amino-acid chain; its full sequence is MSSSLSPTLQTVNGMDQDEPLPLFPSHYPTALGVDRGTVCIPSPYADNGHAEMSFCGPSAPENPAIAPPLSPSLFWSSHNPHAMPALPLHCPPALPYSEPHIHTAWVDTKPHTSGRHSSFLSRPKLFGKRPEDGDGDEALDDDDPSSSSSGAVVKRDMHFCVVCHDYASGYHYGVWSCEGCKAFFKRSIQGHNDYICPATNQCTIDKNRRKSCQACRLRKCYEMGMMKCGARRERCGYRASRRTAPMRDGSARPVGVRGQSQRLPHTPLHVSLSIPVSRASAESGFSGLSPEQLVYCILEAEPPQIYLKQQMKKPYTESTVMMSLTQLADKELVLMISWAKKIPGFVELSLAHQVQLLECCWLEVLMLGLMWRSIDHPGKLIFSLDLKLNRDEGNCVEGIMEIFDMLLAGSSRFRELKLQKEEYVCLKALILLNSSMYMTSSACEKDLESRTKLLRLLDAVTDALVWAISRTGLSTQQQSARLAHLLMLLSHIRHLSNKGMEHLSSMKRKNVVLLYDLLLEMLDANMAQSRHVSTSVCTDPVTPATSPNTPLPPQLHSPVAHHVTQVNESQCSQE.

Residues Met1–Phe160 are modulating. The tract at residues Asp108 to Gly151 is disordered. A compositionally biased stretch (acidic residues) spans Gly134 to Pro145. 2 consecutive NR C4-type zinc fingers follow at residues Cys161 to Cys181 and Cys197 to Cys221. A DNA-binding region (nuclear receptor) is located at residues Cys161–Met226. Residues Ser290–Asn526 enclose the NR LBD domain. Over residues Val537–Asn549 the composition is skewed to polar residues. The interval Val537–His557 is disordered.

It belongs to the nuclear hormone receptor family. NR3 subfamily. Binds DNA as a homodimer. Can form a heterodimer with ER-alpha. In terms of tissue distribution, ovary and testis.

It localises to the nucleus. Binds estrogens with an affinity similar to that of ER-alpha, and activates expression of reporter genes containing estrogen response elements (ERE) in an estrogen-dependent manner. The chain is Estrogen receptor beta (esr2) from Ictalurus punctatus (Channel catfish).